The chain runs to 773 residues: 5-methyltetrahydropteroyltriglutamate--homocysteine methyltransferase (773 aa).

5-methyltetrahydropteroyltri-L-glutamate-binding positions include 16–19 (RELK) and Lys116. L-homocysteine-binding positions include 437–439 (IGS) and Glu490. Residues 437–439 (IGS) and Glu490 contribute to the L-methionine site. Residues 521-522 (RC) and Trp567 contribute to the 5-methyltetrahydropteroyltri-L-glutamate site. Residue Asp605 coordinates L-homocysteine. Asp605 contributes to the L-methionine binding site. Glu611 provides a ligand contact to 5-methyltetrahydropteroyltri-L-glutamate. Residues His647, Cys649, and Glu671 each coordinate Zn(2+). His700 serves as the catalytic Proton donor. Cys732 serves as a coordination point for Zn(2+).

The protein belongs to the vitamin-B12 independent methionine synthase family. Zn(2+) serves as cofactor.

The catalysed reaction is 5-methyltetrahydropteroyltri-L-glutamate + L-homocysteine = tetrahydropteroyltri-L-glutamate + L-methionine. It participates in amino-acid biosynthesis; L-methionine biosynthesis via de novo pathway; L-methionine from L-homocysteine (MetE route): step 1/1. In terms of biological role, catalyzes the transfer of a methyl group from 5-methyltetrahydrofolate to homocysteine resulting in methionine formation. This is 5-methyltetrahydropteroyltriglutamate--homocysteine methyltransferase from Alkalilimnicola ehrlichii (strain ATCC BAA-1101 / DSM 17681 / MLHE-1).